Consider the following 548-residue polypeptide: Medium/long-chain-fatty-acid--CoA/3-oxocholest-4-en-26-oate--CoA ligase (548 aa).

ATP is bound by residues 174–182 (TGGTTGFPK), Asp415, Arg430, and Lys521. Over residues 520–541 (GKPDYRWAKEQTEARPADDVHA) the composition is skewed to basic and acidic residues. The interval 520–548 (GKPDYRWAKEQTEARPADDVHAGHVTSGG) is disordered.

The protein belongs to the ATP-dependent AMP-binding enzyme family.

The enzyme catalyses a medium-chain fatty acid + ATP + CoA = a medium-chain fatty acyl-CoA + AMP + diphosphate. It catalyses the reaction a long-chain fatty acid + ATP + CoA = a long-chain fatty acyl-CoA + AMP + diphosphate. The catalysed reaction is (25S)-3-oxocholest-4-en-26-oate + ATP + CoA = (25S)-3-oxocholest-4-en-26-oyl-CoA + AMP + diphosphate. It functions in the pathway lipid metabolism; fatty acid biosynthesis. Its pathway is steroid metabolism; cholesterol metabolism. Functionally, catalyzes the activation of medium/long-chain fatty acids as acyl-coenzyme A (acyl-CoA), which are then transferred to the multifunctional polyketide synthase (PKS) type III for further chain extension. Also involved in the degradation of cholesterol via the degradation of the side chains of C-24 branched-chain sterols. Catalyzes the ATP-dependent CoA thioesterification of the sterol 3-oxocholest-4-en-26-oate to yield 3-oxocholest-4-en-26-oyl-CoA. This Mycobacterium bovis (strain ATCC BAA-935 / AF2122/97) protein is Medium/long-chain-fatty-acid--CoA/3-oxocholest-4-en-26-oate--CoA ligase.